The following is a 375-amino-acid chain: MLVNNVFSLLCFPLLMSVVRCSTLSRQRRQFVFPDEEELCSNRFTEEGTCKNVLDCRILLQKNDYNLLKESICGFEGITPKVCCPKSSHVISSTQAPPETTTTERPPKQIPPNLPEVCGIHNTTTTRIIGGREAPIGAWPWMTAVYIKQGGIRSVQCGGALVTNRHVITASHCVVNSAGTDVMPADVFSVRLGEHNLYSTDDDSNPIDFAVTSVKHHEHFVLATYLNDIAILTLNDTVTFTDRIRPICLPYRKLRYDDLAMRKPFITGWGTTAFNGPSSAVLREVQLPIWEHEACRQAYEKDLNITNVYMCAGFADGGKDACQGDSGGPMMLPVKTGEFYLIGIVSFGKKCALPGFPGVYTKVTEFLDWIAEHMV.

The first 21 residues, 1–21 (MLVNNVFSLLCFPLLMSVVRC), serve as a signal peptide directing secretion. A propeptide spanning residues 22-27 (STLSRQ) is cleaved from the precursor. At Q30 the chain carries Pyrrolidone carboxylic acid. The Clip domain occupies 39–84 (LCSNRFTEEGTCKNVLDCRILLQKNDYNLLKESICGFEGITPKVCC). Intrachain disulfides connect C40/C83, C50/C73, and C56/C84. The interval 90–113 (VISSTQAPPETTTTERPPKQIPPN) is disordered. 4 cysteine pairs are disulfide-bonded: C118-C248, C157-C173, C295-C311, and C322-C351. The N-linked (GlcNAc...) asparagine glycan is linked to N122. Residues 128-375 (IIGGREAPIG…FLDWIAEHMV (248 aa)) form the Peptidase S1 domain. Residue H172 is the Charge relay system of the active site. E194, N196, S199, and D202 together coordinate Ca(2+). D228 functions as the Charge relay system in the catalytic mechanism. N235 and N304 each carry an N-linked (GlcNAc...) asparagine glycan. S326 functions as the Charge relay system in the catalytic mechanism.

Belongs to the peptidase S1 family. CLIP subfamily. As to quaternary structure, in the active form, heterodimer of a light chain and a heavy chain; disulfide-linked. Forms a covalent heterodimer with intracellular coagulation inhibitor 2/LICI-2. Post-translationally, proteolytically cleaved into its mature active form by serine protease factor B. Cleavage produces a 25 kDa light chain containing the CLIP domain and a catalytic 31 kDa heavy chain which remain covalently associated through an interchain disulfide bond. Proteolytically cleaved by clotting factor G subunit beta. Contains six O-linked carbohydrate chains in the N-terminal light chain. Expressed in hemocytes (at protein level).

The protein resides in the cytoplasmic vesicle. The protein localises to the secretory vesicle. Its subcellular location is the secreted. It carries out the reaction Selective cleavage of 18-Arg-|- and 47-Arg-|- bonds in coagulogen to form coagulin and fragments.. Inhibited by intracellular coagulation inhibitor 2/LICI-2 and to a lesser extent by intracellular coagulation inhibitor 3/LICI-3. Its function is as follows. This enzyme is closely associated with an endotoxin-sensitive hemolymph coagulation system in limulus. Its active form catalyzes the conversion of coagulogen to insoluble coagulin gel. This Tachypleus tridentatus (Japanese horseshoe crab) protein is Proclotting enzyme.